The following is a 342-amino-acid chain: Probable long-chain-alcohol O-fatty-acyltransferase 3 (342 aa).

A run of 8 helical transmembrane segments spans residues 9–29 (IKLW…STGI), 36–56 (LLSV…FSYV), 58–78 (FSGC…ILFS), 115–135 (IPIW…QMYE), 153–173 (IFLE…ITLG), 227–247 (MFLG…MLFF), 255–275 (TGEV…EVAV), and 297–317 (VGFV…SGII).

Belongs to the wax synthase family.

The protein resides in the membrane. It carries out the reaction a long chain fatty alcohol + a fatty acyl-CoA = a wax ester + CoA. In terms of biological role, catalyzes the final step in the synthesis of long-chain linear esters (waxes). The polypeptide is Probable long-chain-alcohol O-fatty-acyltransferase 3 (AT3) (Arabidopsis thaliana (Mouse-ear cress)).